We begin with the raw amino-acid sequence, 212 residues long: Orotate phosphoribosyltransferase (212 aa).

Lys26 is a 5-phospho-alpha-D-ribose 1-diphosphate binding site. An orotate-binding site is contributed by Phe34–Phe35. 5-phospho-alpha-D-ribose 1-diphosphate is bound by residues Tyr72–Lys73, Arg98, Lys99, Lys102, His104, and Asp123–Ala131. Residues Thr127 and Arg155 each contribute to the orotate site.

It belongs to the purine/pyrimidine phosphoribosyltransferase family. PyrE subfamily. Homodimer. It depends on Mg(2+) as a cofactor.

The enzyme catalyses orotidine 5'-phosphate + diphosphate = orotate + 5-phospho-alpha-D-ribose 1-diphosphate. It participates in pyrimidine metabolism; UMP biosynthesis via de novo pathway; UMP from orotate: step 1/2. Its function is as follows. Catalyzes the transfer of a ribosyl phosphate group from 5-phosphoribose 1-diphosphate to orotate, leading to the formation of orotidine monophosphate (OMP). The polypeptide is Orotate phosphoribosyltransferase (Marinobacter nauticus (strain ATCC 700491 / DSM 11845 / VT8) (Marinobacter aquaeolei)).